Here is a 413-residue protein sequence, read N- to C-terminus: Serine--tRNA ligase (413 aa).

221 to 223 (TAE) contributes to the L-serine binding site. 252 to 254 (RRE) contributes to the ATP binding site. E275 contributes to the L-serine binding site. 339 to 342 (EVSS) serves as a coordination point for ATP. Residue S375 coordinates L-serine.

This sequence belongs to the class-II aminoacyl-tRNA synthetase family. Type-1 seryl-tRNA synthetase subfamily. Homodimer. The tRNA molecule binds across the dimer.

The protein resides in the cytoplasm. It carries out the reaction tRNA(Ser) + L-serine + ATP = L-seryl-tRNA(Ser) + AMP + diphosphate + H(+). The catalysed reaction is tRNA(Sec) + L-serine + ATP = L-seryl-tRNA(Sec) + AMP + diphosphate + H(+). It participates in aminoacyl-tRNA biosynthesis; selenocysteinyl-tRNA(Sec) biosynthesis; L-seryl-tRNA(Sec) from L-serine and tRNA(Sec): step 1/1. Its function is as follows. Catalyzes the attachment of serine to tRNA(Ser). Is also able to aminoacylate tRNA(Sec) with serine, to form the misacylated tRNA L-seryl-tRNA(Sec), which will be further converted into selenocysteinyl-tRNA(Sec). This Dehalococcoides mccartyi (strain ATCC BAA-2266 / KCTC 15142 / 195) (Dehalococcoides ethenogenes (strain 195)) protein is Serine--tRNA ligase.